Here is a 422-residue protein sequence, read N- to C-terminus: Ameloblastin (422 aa).

An N-terminal signal peptide occupies residues 1–26; it reads MSASKIPLFKMKGLLLFLSLVKMSLA. Position 42 is a hydroxyproline (Pro-42). A Phosphoserine modification is found at Ser-48. O-linked (GalNAc...) serine glycosylation occurs at Ser-117. A disordered region spans residues 271-321; that stretch reads GLNQNSPKGGDFTVEVDSPVSVTKGPEKGEGPEGSPLQEASPDKGENPALL.

The protein belongs to the ameloblastin family. In terms of tissue distribution, ameloblast-specific.

The protein resides in the secreted. Its subcellular location is the extracellular space. The protein localises to the extracellular matrix. Functionally, involved in the mineralization and structural organization of enamel. This Rattus norvegicus (Rat) protein is Ameloblastin (Ambn).